A 292-amino-acid chain; its full sequence is Phosphatidylserine decarboxylase proenzyme (292 aa).

Active-site charge relay system; for autoendoproteolytic cleavage activity residues include aspartate 89, histidine 146, and serine 252. The active-site Schiff-base intermediate with substrate; via pyruvic acid; for decarboxylase activity is serine 252. Serine 252 bears the Pyruvic acid (Ser); by autocatalysis mark.

The protein belongs to the phosphatidylserine decarboxylase family. PSD-B subfamily. Prokaryotic type I sub-subfamily. In terms of assembly, heterodimer of a large membrane-associated beta subunit and a small pyruvoyl-containing alpha subunit. Pyruvate is required as a cofactor. In terms of processing, is synthesized initially as an inactive proenzyme. Formation of the active enzyme involves a self-maturation process in which the active site pyruvoyl group is generated from an internal serine residue via an autocatalytic post-translational modification. Two non-identical subunits are generated from the proenzyme in this reaction, and the pyruvate is formed at the N-terminus of the alpha chain, which is derived from the carboxyl end of the proenzyme. The autoendoproteolytic cleavage occurs by a canonical serine protease mechanism, in which the side chain hydroxyl group of the serine supplies its oxygen atom to form the C-terminus of the beta chain, while the remainder of the serine residue undergoes an oxidative deamination to produce ammonia and the pyruvoyl prosthetic group on the alpha chain. During this reaction, the Ser that is part of the protease active site of the proenzyme becomes the pyruvoyl prosthetic group, which constitutes an essential element of the active site of the mature decarboxylase.

The protein localises to the cell membrane. The enzyme catalyses a 1,2-diacyl-sn-glycero-3-phospho-L-serine + H(+) = a 1,2-diacyl-sn-glycero-3-phosphoethanolamine + CO2. It functions in the pathway phospholipid metabolism; phosphatidylethanolamine biosynthesis; phosphatidylethanolamine from CDP-diacylglycerol: step 2/2. Catalyzes the formation of phosphatidylethanolamine (PtdEtn) from phosphatidylserine (PtdSer). This Shewanella baltica (strain OS223) protein is Phosphatidylserine decarboxylase proenzyme.